A 593-amino-acid polypeptide reads, in one-letter code: NADH-quinone oxidoreductase subunit C/D (593 aa).

Residues 1 to 184 are NADH dehydrogenase I subunit C; sequence MTADSVLSIP…DPYSLSAAKQ (184 aa). Residues 208 to 593 are NADH dehydrogenase I subunit D; sequence DFMFLNLGPN…IDFVMADVDR (386 aa).

It in the N-terminal section; belongs to the complex I 30 kDa subunit family. In the C-terminal section; belongs to the complex I 49 kDa subunit family. As to quaternary structure, NDH-1 is composed of 13 different subunits. Subunits NuoB, CD, E, F, and G constitute the peripheral sector of the complex.

The protein localises to the cell inner membrane. The enzyme catalyses a quinone + NADH + 5 H(+)(in) = a quinol + NAD(+) + 4 H(+)(out). In terms of biological role, NDH-1 shuttles electrons from NADH, via FMN and iron-sulfur (Fe-S) centers, to quinones in the respiratory chain. The immediate electron acceptor for the enzyme in this species is believed to be ubiquinone. Couples the redox reaction to proton translocation (for every two electrons transferred, four hydrogen ions are translocated across the cytoplasmic membrane), and thus conserves the redox energy in a proton gradient. This Azotobacter vinelandii (strain DJ / ATCC BAA-1303) protein is NADH-quinone oxidoreductase subunit C/D.